The primary structure comprises 1040 residues: Probable starch synthase 4, chloroplastic/amyloplastic (1040 aa).

Residues Met1–Ser42 constitute a chloroplast transit peptide. The interval Cys43–Glu142 is disordered. Composition is skewed to basic and acidic residues over residues Asp52–Lys61 and Asn112–Ile124. The stretch at Glu187 to Glu466 forms a coiled coil. Residues Lys556, Gly559, and Asp562 each coordinate ADP. (1,4-alpha-D-glucosyl)n contacts are provided by Trp679 and Gln680. ADP is bound by residues Arg849, Lys854, Lys906, Asp908, Tyr916, Leu933, and Thr934.

Belongs to the glycosyltransferase 1 family. Bacterial/plant glycogen synthase subfamily. Interacts with PTST2. Interacts with PII1; the interaction is essential for the initiation of starch granules biosynthesis in leaf chloroplasts. Expressed in leaves and flowers.

The protein resides in the plastid. It localises to the chloroplast. The protein localises to the amyloplast. It is found in the chloroplast stroma. It carries out the reaction [(1-&gt;4)-alpha-D-glucosyl](n) + ADP-alpha-D-glucose = [(1-&gt;4)-alpha-D-glucosyl](n+1) + ADP + H(+). It participates in glycan biosynthesis; starch biosynthesis. In terms of biological role, probably involved in the priming of starch granule formation. May play a regulatory role in the control of starch accumulation in plastids. Is necessary and sufficient to establish the correct number of starch granules observed in chloroplasts. This is Probable starch synthase 4, chloroplastic/amyloplastic from Arabidopsis thaliana (Mouse-ear cress).